A 460-amino-acid polypeptide reads, in one-letter code: Bifunctional protein GlmU (460 aa).

Residues 1 to 232 (MALNVVILAA…AIEVEGANNR (232 aa)) form a pyrophosphorylase region. UDP-N-acetyl-alpha-D-glucosamine is bound by residues 8 to 11 (LAAG), lysine 22, glutamine 73, 78 to 79 (GT), 100 to 102 (YGD), glycine 137, glutamate 157, asparagine 172, and asparagine 230. Mg(2+) is bound at residue aspartate 102. Residue asparagine 230 participates in Mg(2+) binding. The linker stretch occupies residues 233 to 253 (VQLAQLERAYQAREAEKLMLA). The segment at 254-460 (GANLRDPSRI…GWQRPVKIKK (207 aa)) is N-acetyltransferase. The UDP-N-acetyl-alpha-D-glucosamine site is built by arginine 336 and lysine 354. The active-site Proton acceptor is histidine 366. UDP-N-acetyl-alpha-D-glucosamine is bound by residues tyrosine 369 and asparagine 380. Residues alanine 383, 389–390 (NY), serine 408, alanine 426, and arginine 443 contribute to the acetyl-CoA site.

The protein in the N-terminal section; belongs to the N-acetylglucosamine-1-phosphate uridyltransferase family. This sequence in the C-terminal section; belongs to the transferase hexapeptide repeat family. In terms of assembly, homotrimer. The cofactor is Mg(2+).

The protein localises to the cytoplasm. The enzyme catalyses alpha-D-glucosamine 1-phosphate + acetyl-CoA = N-acetyl-alpha-D-glucosamine 1-phosphate + CoA + H(+). It catalyses the reaction N-acetyl-alpha-D-glucosamine 1-phosphate + UTP + H(+) = UDP-N-acetyl-alpha-D-glucosamine + diphosphate. Its pathway is nucleotide-sugar biosynthesis; UDP-N-acetyl-alpha-D-glucosamine biosynthesis; N-acetyl-alpha-D-glucosamine 1-phosphate from alpha-D-glucosamine 6-phosphate (route II): step 2/2. It functions in the pathway nucleotide-sugar biosynthesis; UDP-N-acetyl-alpha-D-glucosamine biosynthesis; UDP-N-acetyl-alpha-D-glucosamine from N-acetyl-alpha-D-glucosamine 1-phosphate: step 1/1. It participates in bacterial outer membrane biogenesis; LPS lipid A biosynthesis. Functionally, catalyzes the last two sequential reactions in the de novo biosynthetic pathway for UDP-N-acetylglucosamine (UDP-GlcNAc). The C-terminal domain catalyzes the transfer of acetyl group from acetyl coenzyme A to glucosamine-1-phosphate (GlcN-1-P) to produce N-acetylglucosamine-1-phosphate (GlcNAc-1-P), which is converted into UDP-GlcNAc by the transfer of uridine 5-monophosphate (from uridine 5-triphosphate), a reaction catalyzed by the N-terminal domain. The chain is Bifunctional protein GlmU from Shewanella baltica (strain OS155 / ATCC BAA-1091).